Consider the following 440-residue polypeptide: Gap junction alpha-8 protein (440 aa).

An intramembrane segment occupies 2 to 12; the sequence is GDWSFLGNILE. The Cytoplasmic segment spans residues 13–21; sequence EVNEHSTVI. Residues 22–42 form a helical membrane-spanning segment; that stretch reads GRVWLTVLFIFRILILGTAAE. At 43–71 the chain is on the extracellular side; the sequence is FVWGDEQSDFVCNTQQPGCENVCYDEAFP. 3 disulfides stabilise this stretch: cysteine 54–cysteine 201, cysteine 61–cysteine 195, and cysteine 65–cysteine 190. Residues 72 to 92 form a helical membrane-spanning segment; it reads ISHIRLWVLQIIFVSTPSLMY. Topologically, residues 93 to 161 are cytoplasmic; sequence VGHAVHHVRM…GTLLRTYVCH (69 aa). The segment at 111-143 is disordered; sequence AEELCQQSRSNGGERVPIAPDQASIRKSSSSSK. The chain crosses the membrane as a helical span at residues 162-182; sequence IIFKTLFEVGFIVGHYFLYGF. The Extracellular segment spans residues 183–210; the sequence is RILPLYRCSRWPCPNVVDCFVSRPTEKT. A helical membrane pass occupies residues 211–231; the sequence is IFILFMLSVAFVSLFLNIMEM. Topologically, residues 232-440 are cytoplasmic; that stretch reads SHLGMKGIRS…SRARSDDLTI (209 aa). A disordered region spans residues 338-440; it reads VEREEPPIEE…SRARSDDLTI (103 aa). Composition is skewed to basic and acidic residues over residues 353 to 364 and 374 to 399; these read VGEKKQEAEKVA and PDRE…EKVT. Residues 423–432 are compositionally biased toward low complexity; the sequence is LSRLSKASSR.

This sequence belongs to the connexin family. Alpha-type (group II) subfamily. In terms of assembly, a hemichannel or connexon is composed of a hexamer of connexins. A functional gap junction is formed by the apposition of two hemichannels. Forms heteromeric channels with GJA3. As to expression, detected in eye lens (at protein level). Eye lens.

It localises to the cell membrane. Its subcellular location is the cell junction. The protein resides in the gap junction. Structural component of eye lens gap junctions. Gap junctions are dodecameric channels that connect the cytoplasm of adjoining cells. They are formed by the docking of two hexameric hemichannels, one from each cell membrane. Small molecules and ions diffuse from one cell to a neighboring cell via the central pore. The protein is Gap junction alpha-8 protein (Gja8) of Mus musculus (Mouse).